The chain runs to 314 residues: Malate dehydrogenase (314 aa).

Residues 11–16 (GSGNIG) and aspartate 35 contribute to the NAD(+) site. 2 residues coordinate substrate: arginine 84 and arginine 90. NAD(+) contacts are provided by residues asparagine 97 and 120 to 122 (ITN). Asparagine 122 and arginine 153 together coordinate substrate. Histidine 177 (proton acceptor) is an active-site residue.

The protein belongs to the LDH/MDH superfamily. MDH type 3 family.

The catalysed reaction is (S)-malate + NAD(+) = oxaloacetate + NADH + H(+). Catalyzes the reversible oxidation of malate to oxaloacetate. The chain is Malate dehydrogenase from Rickettsia rickettsii (strain Iowa).